Reading from the N-terminus, the 436-residue chain is UPF0597 protein YhaM (436 aa).

This sequence belongs to the UPF0597 family.

This is UPF0597 protein YhaM from Salmonella choleraesuis (strain SC-B67).